A 458-amino-acid chain; its full sequence is Phosphoglucosamine mutase (458 aa).

The active-site Phosphoserine intermediate is the serine 106. Positions 106, 247, 249, and 251 each coordinate Mg(2+). Serine 106 carries the phosphoserine modification.

This sequence belongs to the phosphohexose mutase family. It depends on Mg(2+) as a cofactor. Activated by phosphorylation.

It carries out the reaction alpha-D-glucosamine 1-phosphate = D-glucosamine 6-phosphate. Catalyzes the conversion of glucosamine-6-phosphate to glucosamine-1-phosphate. The sequence is that of Phosphoglucosamine mutase from Chlamydia trachomatis serovar D (strain ATCC VR-885 / DSM 19411 / UW-3/Cx).